The sequence spans 500 residues: Phosphatidylserine decarboxylase proenzyme 1, mitochondrial (500 aa).

Residues methionine 1–leucine 48 constitute a mitochondrion; not cleaved when targeted to the endoplasmic reticulum transit peptide. Asparagine 34 carries an N-linked (GlcNAc...) asparagine glycan. At serine 45–tryptophan 79 the chain is on the mitochondrial matrix side. An enables targeting to the endoplasmic reticulum in addition to mitochondria region spans residues glycine 57–threonine 101. A helical membrane pass occupies residues valine 80–asparagine 98. The Mitochondrial intermembrane portion of the chain corresponds to aspartate 99–lysine 500. Active-site charge relay system; for autoendoproteolytic cleavage activity residues include aspartate 210, histidine 348, and serine 463. Serine 463 acts as the Schiff-base intermediate with substrate; via pyruvic acid; for decarboxylase activity in catalysis. Pyruvic acid (Ser); by autocatalysis is present on serine 463. A required for processing and stability region spans residues phenylalanine 475–glycine 492.

The protein belongs to the phosphatidylserine decarboxylase family. PSD-B subfamily. Eukaryotic type I sub-subfamily. In terms of assembly, heterodimer of a large membrane-associated beta subunit and a small pyruvoyl-containing alpha subunit. Pyruvate is required as a cofactor. In terms of processing, glycosylated at Asn-34 in the endoplasmic reticulum. Post-translationally, the precursor is imported via the TOM complex into mitochondria, where the N-terminal presequence is cleaved by the matrix-located proteases MPP (MAS1-MAS2) and OCT1. Is synthesized initially as an inactive proenzyme. Formation of the active enzyme involves a self-maturation process in which the active site pyruvoyl group is generated from an internal serine residue via an autocatalytic post-translational modification. Two non-identical subunits are generated from the proenzyme in this reaction, and the pyruvate is formed at the N-terminus of the alpha chain, which is derived from the carboxyl end of the proenzyme. The autoendoproteolytic cleavage occurs by a canonical serine protease mechanism, in which the side chain hydroxyl group of the serine supplies its oxygen atom to form the C-terminus of the beta chain, while the remainder of the serine residue undergoes an oxidative deamination to produce ammonia and the pyruvoyl prosthetic group on the alpha chain. During this reaction, the Ser that is part of the protease active site of the proenzyme becomes the pyruvoyl prosthetic group, which constitutes an essential element of the active site of the mature decarboxylase.

It localises to the mitochondrion inner membrane. It is found in the lipid droplet. The protein localises to the endoplasmic reticulum membrane. The enzyme catalyses a 1,2-diacyl-sn-glycero-3-phospho-L-serine + H(+) = a 1,2-diacyl-sn-glycero-3-phosphoethanolamine + CO2. The protein operates within phospholipid metabolism; phosphatidylethanolamine biosynthesis; phosphatidylethanolamine from CDP-diacylglycerol: step 2/2. Functionally, catalyzes the formation of phosphatidylethanolamine (PtdEtn) from phosphatidylserine (PtdSer). Plays a central role in phospholipid metabolism and in the interorganelle trafficking of phosphatidylserine. Phosphatidylethanolamine formed in the mitochondria is exported to other membranes to fullfill their requirements for PtdEtn. Required for normal mitochondrial morphology and proper mitochondrial fusion during yeast mating. Involved in lipid droplet biogenesis at the endoplasmic reticulum membrane. Required for induction of mitophagy during nitrogen starvation. Appears to play a specific role in supporting respiratory complex III activity. This chain is Phosphatidylserine decarboxylase proenzyme 1, mitochondrial, found in Saccharomyces cerevisiae (strain ATCC 204508 / S288c) (Baker's yeast).